Consider the following 188-residue polypeptide: F-box only protein 36 (188 aa).

The F-box domain maps to F91–I137.

As to quaternary structure, directly interacts with SKP1 and CUL1.

In terms of biological role, substrate-recognition component of the SCF (SKP1-CUL1-F-box protein)-type E3 ubiquitin ligase complex. The sequence is that of F-box only protein 36 (FBXO36) from Homo sapiens (Human).